The following is a 261-amino-acid chain: Thiamine thiazole synthase (261 aa).

NAD(+) is bound by residues Ala33, 52 to 53, Gly60, Val124, and 152 to 154; these read ER and HVD. Residues Asp154 and His169 each contribute to the Fe cation site. NAD(+) is bound at residue Ile219. A glycine-binding site is contributed by Arg229.

It belongs to the THI4 family. Homooctamer; tetramer of dimers. It depends on Fe(2+) as a cofactor.

It catalyses the reaction hydrogen sulfide + glycine + NAD(+) = ADP-5-ethyl-4-methylthiazole-2-carboxylate + nicotinamide + 3 H2O + H(+). It participates in cofactor biosynthesis; thiamine diphosphate biosynthesis. Its function is as follows. Involved in the biosynthesis of the thiazole moiety of thiamine. Catalyzes the conversion of NAD and glycine to adenosine diphosphate 5-(2-hydroxyethyl)-4-methylthiazole-2-carboxylate (ADT), an adenylated thiazole intermediate, using free sulfide as a source of sulfur. The chain is Thiamine thiazole synthase from Pyrobaculum calidifontis (strain DSM 21063 / JCM 11548 / VA1).